The primary structure comprises 264 residues: Indolethylamine N-methyltransferase (264 aa).

K14 is subject to N6-succinyllysine. S-adenosyl-L-methionine contacts are provided by residues Y21, Y26, 64-65 (GS), Y70, D86, and N91. K97 is subject to N6-succinyllysine. S-adenosyl-L-methionine-binding positions include 143–144 (DV) and F164.

This sequence belongs to the class I-like SAM-binding methyltransferase superfamily. NNMT/PNMT/TEMT family. In terms of assembly, monomer. As to expression, detected in lung and liver (at protein level).

Its subcellular location is the cytoplasm. It catalyses the reaction a tertiary amine + S-adenosyl-L-methionine = a methylated tertiary amine + S-adenosyl-L-homocysteine + H(+). The enzyme catalyses a secondary amine + S-adenosyl-L-methionine = a methylated secondary amine + S-adenosyl-L-homocysteine + H(+). The catalysed reaction is a primary amine + S-adenosyl-L-methionine = a methylated primary amine + S-adenosyl-L-homocysteine + H(+). It carries out the reaction dimethyl sulfide + S-adenosyl-L-methionine = trimethylsulfonium + S-adenosyl-L-homocysteine. Inhibited by the S-adenosyl-L-methionine analog sinefungin and by the product S-adenosyl-L-homocysteine. Functionally, catalyzes the N-methylation of tryptamine and structurally related compounds. Functions as a thioether S-methyltransferase and is active with a variety of thioethers and the corresponding selenium and tellurium compounds, including 3-methylthiopropionaldehyde, dimethyl selenide, dimethyl telluride, 2-methylthioethylamine, 2-methylthioethanol, methyl-n-propyl sulfide and diethyl sulfide. Plays an important role in the detoxification of selenium compounds. This chain is Indolethylamine N-methyltransferase (Inmt), found in Mus musculus (Mouse).